A 308-amino-acid polypeptide reads, in one-letter code: Tetraacyldisaccharide 4'-kinase (308 aa).

ATP is bound at residue 63 to 70 (SFGGNGKT).

It belongs to the LpxK family.

It carries out the reaction a lipid A disaccharide + ATP = a lipid IVA + ADP + H(+). The protein operates within glycolipid biosynthesis; lipid IV(A) biosynthesis; lipid IV(A) from (3R)-3-hydroxytetradecanoyl-[acyl-carrier-protein] and UDP-N-acetyl-alpha-D-glucosamine: step 6/6. In terms of biological role, transfers the gamma-phosphate of ATP to the 4'-position of a tetraacyldisaccharide 1-phosphate intermediate (termed DS-1-P) to form tetraacyldisaccharide 1,4'-bis-phosphate (lipid IVA). The sequence is that of Tetraacyldisaccharide 4'-kinase from Campylobacter jejuni subsp. jejuni serotype O:2 (strain ATCC 700819 / NCTC 11168).